The chain runs to 471 residues: Ribulose bisphosphate carboxylase large chain (471 aa).

Substrate contacts are provided by N115 and T165. K167 (proton acceptor) is an active-site residue. K169 serves as a coordination point for substrate. Positions 193, 195, and 196 each coordinate Mg(2+). The residue at position 193 (K193) is an N6-carboxylysine. H286 functions as the Proton acceptor in the catalytic mechanism. Substrate-binding residues include R287, H319, and S371.

This sequence belongs to the RuBisCO large chain family. Type I subfamily. Heterohexadecamer of 8 large chains and 8 small chains. Forms a CsoS2-CsoS1-RuBisCO complex. Mg(2+) is required as a cofactor.

It localises to the carboxysome. The catalysed reaction is 2 (2R)-3-phosphoglycerate + 2 H(+) = D-ribulose 1,5-bisphosphate + CO2 + H2O. The enzyme catalyses D-ribulose 1,5-bisphosphate + O2 = 2-phosphoglycolate + (2R)-3-phosphoglycerate + 2 H(+). Its function is as follows. RuBisCO catalyzes two reactions: the carboxylation of D-ribulose 1,5-bisphosphate, the primary event in carbon dioxide fixation, as well as the oxidative fragmentation of the pentose substrate in the photorespiration process. Both reactions occur simultaneously and in competition at the same active site. The sequence is that of Ribulose bisphosphate carboxylase large chain from Parasynechococcus marenigrum (strain WH8102).